The chain runs to 138 residues: Ribulose bisphosphate carboxylase small subunit (138 aa).

This sequence belongs to the RuBisCO small chain family. As to quaternary structure, heterohexadecamer of 8 large and 8 small subunits.

Its subcellular location is the plastid. The protein localises to the chloroplast. In terms of biological role, ruBisCO catalyzes two reactions: the carboxylation of D-ribulose 1,5-bisphosphate, the primary event in carbon dioxide fixation, as well as the oxidative fragmentation of the pentose substrate in the photorespiration process. Both reactions occur simultaneously and in competition at the same active site. Although the small subunit is not catalytic it is essential for maximal activity. The sequence is that of Ribulose bisphosphate carboxylase small subunit from Cyanidium caldarium (Red alga).